The sequence spans 154 residues: Interleukin-2 (154 aa).

Positions 1 to 20 (MCKMQLLSCIALSLVLVANS) are cleaved as a signal peptide. Threonine 23 carries O-linked (GalNAc...) threonine glycosylation. Cysteines 78 and 126 form a disulfide.

This sequence belongs to the IL-2 family.

It localises to the secreted. In terms of biological role, cytokine produced by activated CD4-positive helper T-cells and to a lesser extend activated CD8-positive T-cells and natural killer (NK) cells that plays pivotal roles in the immune response and tolerance. Binds to a receptor complex composed of either the high-affinity trimeric IL-2R (IL2RA/CD25, IL2RB/CD122 and IL2RG/CD132) or the low-affinity dimeric IL-2R (IL2RB and IL2RG). Interaction with the receptor leads to oligomerization and conformation changes in the IL-2R subunits resulting in downstream signaling starting with phosphorylation of JAK1 and JAK3. In turn, JAK1 and JAK3 phosphorylate the receptor to form a docking site leading to the phosphorylation of several substrates including STAT5. This process leads to activation of several pathways including STAT, phosphoinositide-3-kinase/PI3K and mitogen-activated protein kinase/MAPK pathways. Functions as a T-cell growth factor and can increase NK-cell cytolytic activity as well. Promotes strong proliferation of activated B-cells and subsequently immunoglobulin production. Plays a pivotal role in regulating the adaptive immune system by controlling the survival and proliferation of regulatory T-cells, which are required for the maintenance of immune tolerance. Moreover, participates in the differentiation and homeostasis of effector T-cell subsets, including Th1, Th2, Th17 as well as memory CD8-positive T-cells. The polypeptide is Interleukin-2 (IL2) (Mirounga angustirostris (Northern elephant seal)).